We begin with the raw amino-acid sequence, 493 residues long: ATP synthase subunit beta, chloroplastic (493 aa).

Gly170–Thr177 lines the ATP pocket.

It belongs to the ATPase alpha/beta chains family. In terms of assembly, F-type ATPases have 2 components, CF(1) - the catalytic core - and CF(0) - the membrane proton channel. CF(1) has five subunits: alpha(3), beta(3), gamma(1), delta(1), epsilon(1). CF(0) has four main subunits: a(1), b(1), b'(1) and c(9-12).

It localises to the plastid. The protein localises to the chloroplast thylakoid membrane. The catalysed reaction is ATP + H2O + 4 H(+)(in) = ADP + phosphate + 5 H(+)(out). Functionally, produces ATP from ADP in the presence of a proton gradient across the membrane. The catalytic sites are hosted primarily by the beta subunits. The polypeptide is ATP synthase subunit beta, chloroplastic (Staurastrum punctulatum (Green alga)).